The primary structure comprises 1065 residues: DNA ligase 4 (1065 aa).

A disordered region spans residues 1 to 20 (MAVHAPYNHAPPPTQEINGQ). The ATP site is built by glutamate 295, lysine 297, leucine 298, arginine 302, glutamate 357, phenylalanine 387, glutamate 452, lysine 457, lysine 474, and lysine 476. The active-site N6-AMP-lysine intermediate is lysine 297. A Mg(2+)-binding site is contributed by glutamate 357. Glutamate 452 contributes to the Mg(2+) binding site. Residues 696–775 (VETSIFSDMT…TALPFLKEFL (80 aa)) enclose the BRCT 1 domain. Residues 825–928 (GEDKDEIDVE…SDVGVNGDDY (104 aa)) form a disordered region. Composition is skewed to basic and acidic residues over residues 834–864 (EESR…KKLQ) and 886–900 (MSLK…ERSR). The BRCT 2 domain occupies 954-1064 (DEDRIFYHLA…TLLDEDLYKP (111 aa)).

The protein belongs to the ATP-dependent DNA ligase family. Mg(2+) is required as a cofactor.

The protein resides in the nucleus. The catalysed reaction is ATP + (deoxyribonucleotide)n-3'-hydroxyl + 5'-phospho-(deoxyribonucleotide)m = (deoxyribonucleotide)n+m + AMP + diphosphate.. Its function is as follows. DNA ligase involved in DNA non-homologous end joining (NHEJ); required for double-strand break (DSB) repair. The sequence is that of DNA ligase 4 (LIG4) from Cryptococcus neoformans var. neoformans serotype D (strain B-3501A) (Filobasidiella neoformans).